The following is a 580-amino-acid chain: Microcin-J25 export ATP-binding/permease protein McjD (580 aa).

The next 6 helical transmembrane spans lie at 25 to 45 (FFSMLFITSLSSIIISISPLI), 66 to 86 (VLLACLYMFCVISNKASVFLF), 143 to 163 (VSQNILSPVIQLISTIVVVLS), 167 to 187 (WFSAGVFFLYILVFVIFNTRL), 261 to 281 (AVILFGSVFIYNILGVLNGVV), and 286 to 306 (FIMITSYIILLSTPVENIGAL). In terms of domain architecture, ABC transmembrane type-1 spans 25–312 (FFSMLFITSL…IGALLSEIRQ (288 aa)). The 234-residue stretch at 345 to 578 (LSIRELSFSY…NEYISGLASV (234 aa)) folds into the ABC transporter domain. Position 378 to 385 (378 to 385 (GPSGSGKS)) interacts with ATP.

Belongs to the ABC transporter superfamily. As to quaternary structure, homodimer.

It is found in the cell inner membrane. Is able to protect a cell, which harbors the plasmid pTUC100 encoding microcin J25, against microcin J25. Is required for microcin J25 export out of the producing cells. The polypeptide is Microcin-J25 export ATP-binding/permease protein McjD (mcjD) (Escherichia coli).